We begin with the raw amino-acid sequence, 600 residues long: Proline--tRNA ligase (600 aa).

The protein belongs to the class-II aminoacyl-tRNA synthetase family. ProS type 1 subfamily. As to quaternary structure, homodimer.

Its subcellular location is the cytoplasm. It carries out the reaction tRNA(Pro) + L-proline + ATP = L-prolyl-tRNA(Pro) + AMP + diphosphate. Catalyzes the attachment of proline to tRNA(Pro) in a two-step reaction: proline is first activated by ATP to form Pro-AMP and then transferred to the acceptor end of tRNA(Pro). As ProRS can inadvertently accommodate and process non-cognate amino acids such as alanine and cysteine, to avoid such errors it has two additional distinct editing activities against alanine. One activity is designated as 'pretransfer' editing and involves the tRNA(Pro)-independent hydrolysis of activated Ala-AMP. The other activity is designated 'posttransfer' editing and involves deacylation of mischarged Ala-tRNA(Pro). The misacylated Cys-tRNA(Pro) is not edited by ProRS. The sequence is that of Proline--tRNA ligase from Gloeothece citriformis (strain PCC 7424) (Cyanothece sp. (strain PCC 7424)).